Here is a 317-residue protein sequence, read N- to C-terminus: Melanocyte-stimulating hormone receptor (317 aa).

Residues 1–37 (MPVQGSQRRLLGSLNSTPTATPRLGLAANQTGARCLE) are Extracellular-facing. An N-linked (GlcNAc...) asparagine glycan is attached at Asn-29. A helical transmembrane segment spans residues 38-63 (VSIPDGLFLSLGLVSLVENVLVVVAI). The Cytoplasmic segment spans residues 64-72 (ARNRNLHSP). A helical transmembrane segment spans residues 73–93 (MYCFICCLALSDLLVSGSNML). The Extracellular segment spans residues 94–118 (ETAVILLLEAGALAARAAVVQQLDN). A helical membrane pass occupies residues 119-140 (VIDVITCSSMLSSLCFLGAIAV). Over 141 to 163 (DRYISIFYALRYHSIVTLRRARR) the chain is Cytoplasmic. The chain crosses the membrane as a helical span at residues 164-183 (VVAAIWVASVLFSTLFIAYC). At 184–191 (DHAAVLLS) the chain is on the extracellular side. The chain crosses the membrane as a helical span at residues 192-211 (LVVFFLAMLVLMAVLYVHML). The Cytoplasmic portion of the chain corresponds to 212-240 (ARACQHAQGIAQLHKRQRPAHQGVGLKGA). Residues 241–266 (ATLTILLGIFFLCWGPFFLHLTLIVL) traverse the membrane as a helical segment. The Extracellular segment spans residues 267–279 (CPQHPTCSCIFKN). Residues 280-300 (FNLFLTLIICNAIIDPLIYAF) traverse the membrane as a helical segment. The Cytoplasmic segment spans residues 301-317 (RSQELRRTLKKVLLCSW). Residue Cys-315 is the site of S-palmitoyl cysteine attachment.

This sequence belongs to the G-protein coupled receptor 1 family. As to quaternary structure, interacts with MGRN1, but does not undergo MGRN1-mediated ubiquitination; this interaction competes with GNAS-binding and thus inhibits agonist-induced cAMP production. Interacts with OPN3; the interaction results in a decrease in MC1R-mediated cAMP signaling and ultimately a decrease in melanin production in melanocytes.

Its subcellular location is the cell membrane. Functionally, receptor for MSH (alpha, beta and gamma) and ACTH. The activity of this receptor is mediated by G proteins which activate adenylate cyclase. Mediates melanogenesis, the production of eumelanin (black/brown) and phaeomelanin (red/yellow), via regulation of cAMP signaling in melanocytes. The protein is Melanocyte-stimulating hormone receptor (MC1R) of Trachypithecus auratus (Javan langur).